The following is a 146-amino-acid chain: Villin-like protein ABP41 (146 aa).

This sequence belongs to the villin/gelsolin family. As to quaternary structure, binds to actin. Expressed in pollen (at protein level).

It localises to the cytoplasm. Its subcellular location is the cytoskeleton. Functionally, ca(2+)-dependent actin filament-severing protein that is required for pollen tube growth. Probably regulates the dynamics of the actin cytoskeleton. It can promote the assembly of monomers into filaments (nucleation) as well as sever filaments already formed. The polypeptide is Villin-like protein ABP41 (Lilium davidii (David's lily)).